Consider the following 599-residue polypeptide: Adenine deaminase (599 aa).

Belongs to the metallo-dependent hydrolases superfamily. Adenine deaminase family. Mn(2+) serves as cofactor.

The enzyme catalyses adenine + H2O + H(+) = hypoxanthine + NH4(+). The sequence is that of Adenine deaminase from Clostridium botulinum (strain 657 / Type Ba4).